The sequence spans 242 residues: Small ribosomal subunit protein uS2 (242 aa).

This sequence belongs to the universal ribosomal protein uS2 family.

This chain is Small ribosomal subunit protein uS2, found in Shewanella denitrificans (strain OS217 / ATCC BAA-1090 / DSM 15013).